A 336-amino-acid polypeptide reads, in one-letter code: Probable carboxylesterase 6 (336 aa).

The segment at 1-20 (MGGTKLTHVTTTNPNNSNIH) is disordered. Residues 7–19 (THVTTTNPNNSNI) are compositionally biased toward polar residues. Residues 96–98 (HGG) carry the Involved in the stabilization of the negatively charged intermediate by the formation of the oxyanion hole motif. Active-site residues include Ser176, Asp276, and His303.

Belongs to the 'GDXG' lipolytic enzyme family. In terms of tissue distribution, expressed in roots, leaves, flowers and siliques.

The catalysed reaction is a carboxylic ester + H2O = an alcohol + a carboxylate + H(+). Carboxylesterase acting on esters with varying acyl chain length. This Arabidopsis thaliana (Mouse-ear cress) protein is Probable carboxylesterase 6 (CXE6).